Consider the following 91-residue polypeptide: Large ribosomal subunit protein bL27 (91 aa).

A disordered region spans residues 1 to 21 (MAHKKSGGSSRNGRDSAGRRL).

The protein belongs to the bacterial ribosomal protein bL27 family.

In Phenylobacterium zucineum (strain HLK1), this protein is Large ribosomal subunit protein bL27.